Here is a 72-residue protein sequence, read N- to C-terminus: Translation initiation factor IF-1 (72 aa).

One can recognise an S1-like domain in the interval 1–72; that stretch reads MAKDDVIEVE…TRGRITYRYK (72 aa). Tyr-60 is subject to Phosphotyrosine.

It belongs to the IF-1 family. Component of the 30S ribosomal translation pre-initiation complex which assembles on the 30S ribosome in the order IF-2 and IF-3, IF-1 and N-formylmethionyl-tRNA(fMet); mRNA recruitment can occur at any time during PIC assembly.

Its subcellular location is the cytoplasm. Its function is as follows. One of the essential components for the initiation of protein synthesis. Stabilizes the binding of IF-2 and IF-3 on the 30S subunit to which N-formylmethionyl-tRNA(fMet) subsequently binds. Helps modulate mRNA selection, yielding the 30S pre-initiation complex (PIC). Upon addition of the 50S ribosomal subunit IF-1, IF-2 and IF-3 are released leaving the mature 70S translation initiation complex. This chain is Translation initiation factor IF-1, found in Oceanobacillus iheyensis (strain DSM 14371 / CIP 107618 / JCM 11309 / KCTC 3954 / HTE831).